Reading from the N-terminus, the 2058-residue chain is Protein Daple (2058 aa).

The Calponin-homology (CH) domain maps to 11-131; sequence HFLESPLVTW…KILLLMLGCA (121 aa). Coiled-coil stretches lie at residues 195-221, 247-428, 455-1016, 1043-1082, and 1108-1388; these read HLKRLIDERDECKEVIVDLTQERDYLQ, EDKK…SMNE, ELNE…LRGA, ELLKFKDRTIELERNNAALQAEKKLFREQLQHLESHNLNL, and ANLQ…KFYD. Disordered regions lie at residues 1406 to 1444, 1480 to 1592, 1617 to 1655, 1696 to 1724, 1831 to 1857, 1940 to 1959, and 1988 to 2051; these read LIKPKKEPSRESVKSPTDVQSKTMDNAEMAASPSSMRPL, HRMS…EDMI, TKNRESPVNRNSLHLYDYPEKKNSSRTPTRPRPGSPGSE, LHPSSQSPSPTLHLKDPSQTAVPKSLPSA, YSATSSSQSPEPQALSPHGAMGSRGNS, LALPKEETTPPQPAPSASSL, and PVRP…PQTV. Residues 1409-1418 show a composition bias toward basic and acidic residues; that stretch reads PKKEPSRESV. Positions 1419 to 1429 are enriched in polar residues; that stretch reads KSPTDVQSKTM. Residues 1494–1506 show a composition bias toward basic and acidic residues; it reads GPEHLSRSRRMES. Residues 1552 to 1577 show a composition bias toward polar residues; that stretch reads NAGSSRVPWTSSLEVSRSASNSSSPL. Short sequence motifs (GBA) lie at residues 1653-1675 and 1676-1697; these read GSEMVTLEEFLQESSRQSPPSRR and HSLNDSELITLHQFLFEAETLH. Over residues 1831–1841 the composition is skewed to polar residues; the sequence is YSATSSSQSPE. Residues 2039-2048 show a composition bias toward low complexity; it reads PASPDPSADP. The PDZ-binding signature appears at 2055 to 2058; the sequence is YGCV.

The protein belongs to the CCDC88 family. Interacts with dvl2/dsh via the PDZ-binding motif. Expressed weakly in gastrulae, with slightly stronger expression in the dorsal region. In neurulae, expressed in the neural plate with strong expression in the presumptive mesencephalic region. At the tailbud stage, expressed in somatic cells and in part of the tail. Also strongly expressed in regions of the head including eye vesicles, otic vesicles, olfactory placode and the pharyngeal cavity.

The protein localises to the cytoplasm. It localises to the cell junction. Its function is as follows. Positive regulator of Wnt signaling, acting synergistically with dvl2/dsh. Functions upstream of ctnnb1/beta-catenin in the canonical Wnt pathway, and also activates jnk in the Wnt/planar cell polarity (PCP) pathway. Acts as a non-receptor guanine nucleotide exchange factor which binds to and activates guanine nucleotide-binding protein G(i) alpha subunits. This promotes apical cell constriction and subsequent bending of the neural plate during neurulation via arhgef18. In Xenopus laevis (African clawed frog), this protein is Protein Daple (ccdc88c).